The following is a 287-amino-acid chain: Immunoglobulin alpha Fc receptor (287 aa).

Residues 1–21 (MDPKQTTLLCLVLCLGQRIQA) form the signal peptide. Over 22-227 (QEGDFPMPFI…SIHQDYTTQN (206 aa)) the chain is Extracellular. 2 consecutive Ig-like C2-type domains span residues 42 to 107 (DGSV…IGHY) and 139 to 200 (GENI…YNRS). Cysteines 49 and 100 form a disulfide. N-linked (GlcNAc...) asparagine glycosylation is found at asparagine 65, asparagine 79, asparagine 141, asparagine 177, and asparagine 186. Cysteine 146 and cysteine 193 are disulfide-bonded. Residues 228–246 (LIRMAVAGLVLVALLAILV) form a helical membrane-spanning segment. Residues 247–287 (ENWHSHTALNKEASADVAEPSWSQQMCQPGLTFARTPSVCK) are Cytoplasmic-facing.

In terms of assembly, associates with the Fc epsilon RI gamma 2 receptor inducing tyrosine phosphorylation of gamma 2. As to quaternary structure, (Microbial infection) Interacts with Staphylococcus aureus protein SSL11. As to expression, isoform A.1, isoform A.2 and isoform A.3 are differentially expressed between blood and mucosal myeloid cells. Isoform A.1, isoform A.2 and isoform A.3 are expressed in monocytes. Isoform A.1 and isoform A.2 are expressed in alveolar macrophages; however only one isoform is expressed at alveolar macrophages surfaces.

Its subcellular location is the cell membrane. It localises to the secreted. Functionally, binds to the Fc region of immunoglobulins alpha. Mediates several functions including cytokine production. The protein is Immunoglobulin alpha Fc receptor (FCAR) of Homo sapiens (Human).